The sequence spans 167 residues: Peptide deformylase (167 aa).

Residues Cys91 and His133 each coordinate Fe cation. Glu134 is an active-site residue. Fe cation is bound at residue His137.

It belongs to the polypeptide deformylase family. Requires Fe(2+) as cofactor.

It catalyses the reaction N-terminal N-formyl-L-methionyl-[peptide] + H2O = N-terminal L-methionyl-[peptide] + formate. Functionally, removes the formyl group from the N-terminal Met of newly synthesized proteins. Requires at least a dipeptide for an efficient rate of reaction. N-terminal L-methionine is a prerequisite for activity but the enzyme has broad specificity at other positions. The polypeptide is Peptide deformylase (Neisseria gonorrhoeae (strain ATCC 700825 / FA 1090)).